The primary structure comprises 226 residues: Cytidylate kinase (226 aa).

10–18 is an ATP binding site; it reads GPASSGKST.

This sequence belongs to the cytidylate kinase family. Type 1 subfamily.

It is found in the cytoplasm. The catalysed reaction is CMP + ATP = CDP + ADP. The enzyme catalyses dCMP + ATP = dCDP + ADP. This Enterococcus faecalis (strain ATCC 700802 / V583) protein is Cytidylate kinase.